The chain runs to 293 residues: Ribosomal protein L11 methyltransferase (293 aa).

S-adenosyl-L-methionine-binding residues include threonine 145, glycine 166, aspartate 188, and asparagine 230.

Belongs to the methyltransferase superfamily. PrmA family.

Its subcellular location is the cytoplasm. The catalysed reaction is L-lysyl-[protein] + 3 S-adenosyl-L-methionine = N(6),N(6),N(6)-trimethyl-L-lysyl-[protein] + 3 S-adenosyl-L-homocysteine + 3 H(+). Methylates ribosomal protein L11. This is Ribosomal protein L11 methyltransferase from Salmonella agona (strain SL483).